We begin with the raw amino-acid sequence, 555 residues long: CTP synthase (555 aa).

Residues 1–267 (MTKFVFVTGG…AQQVLKFMHL (267 aa)) form an amidoligase domain region. Serine 13 serves as a coordination point for CTP. A UTP-binding site is contributed by serine 13. ATP is bound by residues 14 to 19 (SIGKGI) and aspartate 71. Aspartate 71 and glutamate 141 together coordinate Mg(2+). CTP contacts are provided by residues 148 to 150 (DIE), 188 to 193 (KTKPTQ), and lysine 224. UTP is bound by residues 188-193 (KTKPTQ) and lysine 224. Alanine 242 contributes to the ATP binding site. The 237-residue stretch at 299-535 (YVQLSDAYLS…VGACLADNGN (237 aa)) folds into the Glutamine amidotransferase type-1 domain. Glycine 354 contributes to the L-glutamine binding site. The active-site Nucleophile; for glutamine hydrolysis is the cysteine 381. L-glutamine contacts are provided by residues 382–385 (LGMQ), glutamate 405, and arginine 463. Residues histidine 508 and glutamate 510 contribute to the active site. The disordered stretch occupies residues 536-555 (NANHHDSTPAEPLVSEPLSS).

This sequence belongs to the CTP synthase family. As to quaternary structure, homotetramer.

The catalysed reaction is UTP + L-glutamine + ATP + H2O = CTP + L-glutamate + ADP + phosphate + 2 H(+). The enzyme catalyses L-glutamine + H2O = L-glutamate + NH4(+). It carries out the reaction UTP + NH4(+) + ATP = CTP + ADP + phosphate + 2 H(+). It functions in the pathway pyrimidine metabolism; CTP biosynthesis via de novo pathway; CTP from UDP: step 2/2. With respect to regulation, allosterically activated by GTP, when glutamine is the substrate; GTP has no effect on the reaction when ammonia is the substrate. The allosteric effector GTP functions by stabilizing the protein conformation that binds the tetrahedral intermediate(s) formed during glutamine hydrolysis. Inhibited by the product CTP, via allosteric rather than competitive inhibition. Catalyzes the ATP-dependent amination of UTP to CTP with either L-glutamine or ammonia as the source of nitrogen. Regulates intracellular CTP levels through interactions with the four ribonucleotide triphosphates. This is CTP synthase from Acaryochloris marina (strain MBIC 11017).